A 137-amino-acid chain; its full sequence is Putative pre-16S rRNA nuclease (137 aa).

It belongs to the YqgF nuclease family.

The protein resides in the cytoplasm. Its function is as follows. Could be a nuclease involved in processing of the 5'-end of pre-16S rRNA. The sequence is that of Putative pre-16S rRNA nuclease from Buchnera aphidicola subsp. Schizaphis graminum (strain Sg).